A 427-amino-acid polypeptide reads, in one-letter code: Tumor necrosis factor receptor superfamily member 16 (427 aa).

The signal sequence occupies residues 1–31 (MRRAGAACSAMDRLRLLLLLLLLLGVSFGGA). Topologically, residues 32 to 254 (KETCSTGMYT…VVTRGTADNL (223 aa)) are extracellular. TNFR-Cys repeat units follow at residues 34-67 (TCST…QTVC), 69-110 (PCLD…DAVC), 111-149 (RCSY…NTVC), and 151-191 (ECPE…DAEC). 12 disulfide bridges follow: C35-C46, C47-C60, C50-C67, C70-C86, C89-C102, C92-C110, C112-C125, C128-C141, C131-C149, C152-C167, C170-C183, and C173-C191. N-linked (GlcNAc...) asparagine glycosylation is present at N63. The disordered stretch occupies residues 197–223 (RWITRSTPPEGSDVTTPSTQEPEAPPE). The segment covering 200–217 (TRSTPPEGSDVTTPSTQE) has biased composition (polar residues). A helical transmembrane segment spans residues 255–275 (IPVYCSILAAVVVGLVAYIAF). The Cytoplasmic segment spans residues 276 to 427 (KRWNSCKQNK…CSESTATSPV (152 aa)). Composition is skewed to polar residues over residues 284–294 (NKQGANSRPVN) and 308–329 (SGIS…TASG). Residues 284-334 (NKQGANSRPVNQTPPPEGEKLHSDSGISVDSQSLHDQQTHTQTASGQALKG) form a disordered region. A Phosphoserine modification is found at S314. The tract at residues 329-344 (GQALKGDGNLYSSLPL) is mediates interaction with KIDINS220. Positions 356–421 (GDTWRHLAGE…DIVESLCSES (66 aa)) constitute a Death domain.

Homodimer; disulfide-linked. Heterodimer with SORCS2. The extracellular domains of the heterodimer bind NGF. The cytoplasmic region of the heterodimer binds TRIO. NGF binding mediates dissociation of TRIO from the receptor complex. Interacts with TRAF2, TRAF4, TRAF6, PTPN13 and RANBP9. Interacts through TRAF6 with SQSTM1 which bridges NGFR to NTRK1. Interacts with BEX1. Interacts with BEX3. Interacts with KIDINS220 and NTRK1. Can form a ternary complex with NTRK1 and KIDINS220 and this complex is affected by the expression levels of KIDINS220. An increase in KIDINS220 expression leads to a decreased association of NGFR and NTRK1. Interacts (via death domain) with RAB31. Interacts with NTRK2; may regulate the ligand specificity of the NTRK2 receptor. Interacts with LINGO1. Interacts with NRADD. Interacts with MAGED1; the interaction antagonizes the association NGFR:NTRK1. Interacts with RTN4R. Interacts (via death domain) with ARHGDIA and RIPK2. Interacts with BFAR. As to quaternary structure, (Microbial infection) Binds to rabies virus glycoprotein Gs. In terms of processing, N-glycosylated. O-glycosylated. Post-translationally, phosphorylated on serine residues. As to expression, detected in Schwann cells. Detected in embryonic brain, in hippocampus neurons (at protein level). Detected in brain and spinal cord.

The protein resides in the cell membrane. It localises to the cytoplasm. Its subcellular location is the perikaryon. It is found in the cell projection. The protein localises to the growth cone. The protein resides in the dendritic spine. In terms of biological role, low affinity neurotrophin receptor which can bind to mature NGF, BDNF, NTF3, and NTF4. Forms a heterodimeric receptor with SORCS2 that binds the precursor forms of NGF (proNGF), BDNF (proBDNF) and NTF3 (proNT3) with high affinity, and has much lower affinity for mature NGF and BDNF. Plays an important role in differentiation and survival of specific neuronal populations during development. Can mediate cell survival as well as cell death of neural cells. The heterodimeric receptor formed with SORCS2 plays a role in proBDNF-dependent synaptic plasticity, in hippocampal long term depression (LTD) and long term potentiation (LTP). Plays a role in the inactivation of RHOA. Plays a role in the regulation of the translocation of GLUT4 to the cell surface in adipocytes and skeletal muscle cells in response to insulin, probably by regulating RAB31 activity, and thereby contributes to the regulation of insulin-dependent glucose uptake. Necessary for the circadian oscillation of the clock genes BMAL1, PER1, PER2 and NR1D1 in the suprachiasmatic nucleus (SCN) of the brain and in liver and of the genes involved in glucose and lipid metabolism in the liver. Its function is as follows. (Microbial infection) Cell surface receptor for rabies virus glycoprotein Gs. Does not bind NGF, BDNF, NTF3, and NTF4. In Mus musculus (Mouse), this protein is Tumor necrosis factor receptor superfamily member 16 (Ngfr).